The chain runs to 1318 residues: Serine/threonine-protein kinase ppk18 (1318 aa).

Positions 431-485 (PSVSPEEVHDISQFNHRNDPPITAASVDSSNSFSVHRSSTNHSSTNSGSPNLSRR) are disordered. Low complexity predominate over residues 462 to 479 (SFSVHRSSTNHSSTNSGS). Residues 566 to 934 (YEIIKPISKG…INEIKEHPFF (369 aa)) enclose the Protein kinase domain. Residues 572 to 580 (ISKGTFGTV) and lysine 595 each bind ATP. The active-site Proton acceptor is aspartate 690. Residues 935 to 1044 (NGINWDDIFS…KNLSVLERAN (110 aa)) form the AGC-kinase C-terminal domain. 3 disordered regions span residues 968-1022 (GAAE…FSEA), 1058-1078 (KLHI…DMPS), and 1091-1127 (SLMT…GPKS). Over residues 972–1000 (SNMSSSVNSGEEVSKDNNVSQERGSQFLR) the composition is skewed to polar residues. A compositionally biased stretch (polar residues) spans 1091-1115 (SLMTNQGSNFSSTDSTPRKSINSSD). Positions 1116–1127 (VESRSKTDGPKS) are enriched in basic and acidic residues. In terms of domain architecture, Response regulatory spans 1200–1316 (KALICVSKLN…LLRGYIARLC (117 aa)).

Belongs to the protein kinase superfamily. Ser/Thr protein kinase family.

The protein localises to the cytoplasm. It carries out the reaction L-seryl-[protein] + ATP = O-phospho-L-seryl-[protein] + ADP + H(+). The enzyme catalyses L-threonyl-[protein] + ATP = O-phospho-L-threonyl-[protein] + ADP + H(+). The sequence is that of Serine/threonine-protein kinase ppk18 (ppk18) from Schizosaccharomyces pombe (strain 972 / ATCC 24843) (Fission yeast).